The following is a 272-amino-acid chain: Bifunctional protein FolD (272 aa).

NADP(+) is bound by residues 155 to 157, Ser-182, and Ile-223; that span reads GRS.

Belongs to the tetrahydrofolate dehydrogenase/cyclohydrolase family. In terms of assembly, homodimer.

The enzyme catalyses (6R)-5,10-methylene-5,6,7,8-tetrahydrofolate + NADP(+) = (6R)-5,10-methenyltetrahydrofolate + NADPH. It catalyses the reaction (6R)-5,10-methenyltetrahydrofolate + H2O = (6R)-10-formyltetrahydrofolate + H(+). The protein operates within one-carbon metabolism; tetrahydrofolate interconversion. Its function is as follows. Catalyzes the oxidation of 5,10-methylenetetrahydrofolate to 5,10-methenyltetrahydrofolate and then the hydrolysis of 5,10-methenyltetrahydrofolate to 10-formyltetrahydrofolate. This is Bifunctional protein FolD from Fervidobacterium nodosum (strain ATCC 35602 / DSM 5306 / Rt17-B1).